Reading from the N-terminus, the 177-residue chain is Large ribosomal subunit protein uL6 (177 aa).

This sequence belongs to the universal ribosomal protein uL6 family. As to quaternary structure, part of the 50S ribosomal subunit.

Functionally, this protein binds to the 23S rRNA, and is important in its secondary structure. It is located near the subunit interface in the base of the L7/L12 stalk, and near the tRNA binding site of the peptidyltransferase center. This is Large ribosomal subunit protein uL6 from Mannheimia succiniciproducens (strain KCTC 0769BP / MBEL55E).